A 100-amino-acid chain; its full sequence is Urease subunit gamma (100 aa).

It belongs to the urease gamma subunit family. In terms of assembly, heterotrimer of UreA (gamma), UreB (beta) and UreC (alpha) subunits. Three heterotrimers associate to form the active enzyme.

It localises to the cytoplasm. It catalyses the reaction urea + 2 H2O + H(+) = hydrogencarbonate + 2 NH4(+). Its pathway is nitrogen metabolism; urea degradation; CO(2) and NH(3) from urea (urease route): step 1/1. In Corynebacterium glutamicum (strain R), this protein is Urease subunit gamma.